Reading from the N-terminus, the 465-residue chain is Polyadenylation factor subunit 2 (465 aa).

Residues 1–20 are compositionally biased toward low complexity; sequence MDGHNQNQYQNQNQIQQSQQ. Residues 1 to 26 form a disordered region; that stretch reads MDGHNQNQYQNQNQIQQSQQPPLKKY. WD repeat units lie at residues 133-163, 175-205, 217-247, 259-290, and 348-378; these read AHDS…KIWQ, AHTE…KIWN, GHHW…KLWD, KFKH…RVFD, and AHDK…RFWT. Residues 417 to 465 are disordered; sequence EFGAAPPPPATLEPHALPNMNGFINKKPRQEIPGIDSNIKSSTLPGLSI. Polar residues predominate over residues 454–465; it reads NIKSSTLPGLSI.

In terms of assembly, component of the cleavage and polyadenylation factor (CPF) complex, which is composed of at least PTI1, SYC1, SSU72, GLC7, MPE1, REF2, PFS2, PTA1, YSH1/BRR5, SWD2, CFT2/YDH1, YTH1, CFT1/YHH1, FIP1 and PAP1. Interacts with YSH1/BRR5, FIP1 and RNA14.

It localises to the nucleus. Functionally, integral and essential component of the cleavage and polyadenylation factor (CPF) complex, which plays a key role in polyadenylation-dependent pre-mRNA 3'-end formation and cooperates with cleavage factors including the CFIA complex and NAB4/CFIB. May bridge the CPF and CFIA complexes. This is Polyadenylation factor subunit 2 (PFS2) from Saccharomyces cerevisiae (strain ATCC 204508 / S288c) (Baker's yeast).